Reading from the N-terminus, the 322-residue chain is Dirigent protein 9 (322 aa).

Residues 1–20 (MAKALHITIFLFLISSNLLA) form the signal peptide.

It belongs to the plant dirigent protein family. In terms of assembly, homodimer.

The protein resides in the secreted. Its subcellular location is the extracellular space. It is found in the apoplast. Dirigent proteins impart stereoselectivity on the phenoxy radical-coupling reaction, yielding optically active lignans from two molecules of coniferyl alcohol in the biosynthesis of lignans, flavonolignans, and alkaloids and thus plays a central role in plant secondary metabolism. The sequence is that of Dirigent protein 9 (DIR9) from Arabidopsis thaliana (Mouse-ear cress).